A 120-amino-acid polypeptide reads, in one-letter code: uncharacterized protein (120 aa).

This is an uncharacterized protein from Allochromatium vinosum (strain ATCC 17899 / DSM 180 / NBRC 103801 / NCIMB 10441 / D) (Chromatium vinosum).